A 671-amino-acid chain; its full sequence is Probable potassium transport system protein Kup 2 (671 aa).

Helical transmembrane passes span 12–32 (FAGL…SPLY), 56–76 (ISLI…MIAL), 99–119 (WLVI…TLTP), 139–159 (IPVP…VILF), 172–192 (AFGP…IANL), 218–238 (VGIL…ALYS), 251–271 (SWPY…AWIL), 296–316 (LFAI…LITG), 345–365 (IYIP…VFLF), 374–394 (AYGL…FEYL), 400–420 (PLYL…MFLI), and 429–449 (GGYV…VWFY).

It belongs to the HAK/KUP transporter (TC 2.A.72) family.

Its subcellular location is the cell membrane. It carries out the reaction K(+)(in) + H(+)(in) = K(+)(out) + H(+)(out). In terms of biological role, transport of potassium into the cell. Likely operates as a K(+):H(+) symporter. In Lactobacillus acidophilus (strain ATCC 700396 / NCK56 / N2 / NCFM), this protein is Probable potassium transport system protein Kup 2.